Reading from the N-terminus, the 242-residue chain is Cytochrome c oxidase subunit 2 (242 aa).

The Mitochondrial intermembrane portion of the chain corresponds to 7–33 (DVPVPYGLYFQDSATPTFDGIIELHDI). The helical transmembrane segment at 34-55 (VMFYIVVTIVLVSYLLFVIIKN) threads the bilayer. Over 56 to 73 (FSNDHISYKYLTHGTTLE) the chain is Mitochondrial matrix. The helical transmembrane segment at 74–98 (IVWTIFPVVILLFIAFPSFILLYLC) threads the bilayer. Residues 99–242 (DEVIDPAMTI…DKFLSWLDEQ (144 aa)) are Mitochondrial intermembrane-facing. The Cu cation site is built by His-177, Cys-212, Glu-214, Cys-216, His-220, and Met-223. Glu-214 contributes to the Mg(2+) binding site.

Belongs to the cytochrome c oxidase subunit 2 family. Component of the cytochrome c oxidase (complex IV, CIV), a multisubunit enzyme composed of a catalytic core of 3 subunits and several supernumerary subunits. The complex exists as a monomer or a dimer and forms supercomplexes (SCs) in the inner mitochondrial membrane with ubiquinol-cytochrome c oxidoreductase (cytochrome b-c1 complex, complex III, CIII). It depends on Cu cation as a cofactor. Post-translationally, the signal sequence of COX2 is processed by IMP1.

The protein resides in the mitochondrion inner membrane. The enzyme catalyses 4 Fe(II)-[cytochrome c] + O2 + 8 H(+)(in) = 4 Fe(III)-[cytochrome c] + 2 H2O + 4 H(+)(out). Its function is as follows. Component of the cytochrome c oxidase, the last enzyme in the mitochondrial electron transport chain which drives oxidative phosphorylation. The respiratory chain contains 3 multisubunit complexes succinate dehydrogenase (complex II, CII), ubiquinol-cytochrome c oxidoreductase (cytochrome b-c1 complex, complex III, CIII) and cytochrome c oxidase (complex IV, CIV), that cooperate to transfer electrons derived from NADH and succinate to molecular oxygen, creating an electrochemical gradient over the inner membrane that drives transmembrane transport and the ATP synthase. Cytochrome c oxidase is the component of the respiratory chain that catalyzes the reduction of oxygen to water. Electrons originating from reduced cytochrome c in the intermembrane space (IMS) are transferred via the dinuclear copper A center (CU(A)) of subunit 2 and heme A of subunit 1 to the active site in subunit 1, a binuclear center (BNC) formed by heme A3 and copper B (CU(B)). The BNC reduces molecular oxygen to 2 water molecules using 4 electrons from cytochrome c in the IMS and 4 protons from the mitochondrial matrix. This is Cytochrome c oxidase subunit 2 (COX2) from Yarrowia lipolytica (strain CLIB 122 / E 150) (Yeast).